A 297-amino-acid polypeptide reads, in one-letter code: uncharacterized protein (297 aa).

Disordered stretches follow at residues Asn-19 to Glu-133, Ala-147 to Ala-214, and Glu-226 to Ala-277. The span at Glu-41–Asp-52 shows a compositional bias: basic and acidic residues. Positions Pro-77–Phe-87 are enriched in acidic residues. A compositionally biased stretch (polar residues) spans Pro-88 to Arg-101. Basic and acidic residues-rich tracts occupy residues Ala-147–Trp-161 and Ile-236–Gly-268.

This is an uncharacterized protein from Caenorhabditis elegans.